The sequence spans 159 residues: Endoribonuclease YbeY (159 aa).

Zn(2+)-binding residues include His-120, His-124, and His-130.

Belongs to the endoribonuclease YbeY family. Zn(2+) is required as a cofactor.

The protein resides in the cytoplasm. Its function is as follows. Single strand-specific metallo-endoribonuclease involved in late-stage 70S ribosome quality control and in maturation of the 3' terminus of the 16S rRNA. The chain is Endoribonuclease YbeY from Parafrankia sp. (strain EAN1pec).